A 507-amino-acid chain; its full sequence is ATP synthase subunit alpha, chloroplastic (507 aa).

170–177 (GDRQTGKT) serves as a coordination point for ATP.

The protein belongs to the ATPase alpha/beta chains family. In terms of assembly, F-type ATPases have 2 components, CF(1) - the catalytic core - and CF(0) - the membrane proton channel. CF(1) has five subunits: alpha(3), beta(3), gamma(1), delta(1), epsilon(1). CF(0) has four main subunits: a, b, b' and c.

It is found in the plastid. It localises to the chloroplast thylakoid membrane. The enzyme catalyses ATP + H2O + 4 H(+)(in) = ADP + phosphate + 5 H(+)(out). In terms of biological role, produces ATP from ADP in the presence of a proton gradient across the membrane. The alpha chain is a regulatory subunit. In Physcomitrium patens (Spreading-leaved earth moss), this protein is ATP synthase subunit alpha, chloroplastic.